Consider the following 140-residue polypeptide: Photosystem I reaction center subunit XI (140 aa).

The next 3 membrane-spanning stretches (helical) occupy residues 48–68 (LEIG…LGPL), 79–99 (LLSA…YGAV), and 119–139 (SGFL…LTLF).

The protein belongs to the PsaL family.

It localises to the plastid. Its subcellular location is the chloroplast thylakoid membrane. The polypeptide is Photosystem I reaction center subunit XI (Cyanidioschyzon merolae (strain NIES-3377 / 10D) (Unicellular red alga)).